Consider the following 907-residue polypeptide: Chloride channel protein 2 (907 aa).

Residues 1-93 (MAAATAAAAT…RCHKFLVSRV (93 aa)) lie on the Cytoplasmic side of the membrane. The tract at residues 22 to 40 (QYEQTLMYGRYTQELGAFA) is essential for channel gating by both voltage and cell volume. A Phosphothreonine modification is found at Thr-26. The interval 42-55 (EEAARIRLGGPEPW) is modulates channel gating by both voltage and cell volume. The next 2 helical transmembrane spans lie at 94 to 127 (GEDWIFLVLLGLLMALVSWAMDYAIAVCLQAQQW) and 136 to 161 (ILLQYLAWVTYPVVLITFSAGFTQIL). The short motif at 167-171 (GSGIP) is the Selectivity filter part_1 element. The helical intramembrane region spans 170-177 (IPEMKTIL). A run of 2 helical transmembrane segments spans residues 186 to 204 (LTLKTFVAKVIGLTCALGS) and 211 to 229 (EGPFVHIASMCAALLSKFL). Residues 209-213 (GKEGP) carry the Selectivity filter part_2 motif. 2 intramembrane regions (helical) span residues 245-257 (MLAAACAVGVGCC) and 261-269 (PIGGVLFSI). Helical transmembrane passes span 281–301 (YWRGFFAATFSAFIFRVLAVW), 327–355 (LPAFAVIGIASGFGGALFVYLNRKIVQVM), 364–383 (FLMKKRLLFPALVTLLISTL), 435–455 (ANVFLTLVIFILMKFWMSALA), and 463–486 (GAFMPVFVIGAAFGRLVGESMAAW). The Selectivity filter part_3 motif lies at 463-467 (GAFMP). The segment at residues 503 to 517 (GGYAVVGAAALAGAV) is an intramembrane region (helical). The note=Loop between two helices intramembrane region spans 518 to 519 (TH). The segment at residues 520 to 531 (TVSTAVIVFELT) is an intramembrane region (helical). The segment at residues 532 to 536 (GQIAH) is an intramembrane region (note=Loop between two helices). The helical transmembrane segment at 537–554 (ILPVMIAVILANAVAQSL) threads the bilayer. Topologically, residues 555-907 (QPSLYDSIIR…TPSDSDDKCQ (353 aa)) are cytoplasmic. Positions 590–648 (MVRDVPHVALSCTFRDLRLALHRTKGRMLALVESPESMILLGSIERSQVVALLGAQLSP) constitute a CBS 1 domain. Positions 650–660 (RRRQHMQKLRK) are enriched in basic residues. Positions 650-720 (RRRQHMQKLR…NATSLQEGTT (71 aa)) are disordered. Low complexity predominate over residues 664 to 678 (SPPSDQESPPSSETS). Over residues 696 to 705 (QTHKPLKPAL) the composition is skewed to basic residues. Over residues 710-720 (SNATSLQEGTT) the composition is skewed to polar residues. A Phosphoserine modification is found at Ser-767. Residues 799–859 (IDPAPFQLVE…GSVTAQGVKV (61 aa)) form the CBS 2 domain. Positions 821–822 (LL) match the Basolateral membrane sorting motif. The interval 865–907 (SFRDSATSSSDTETTEVHALWGPRSRHGLPREGTPSDSDDKCQ) is disordered.

Belongs to the chloride channel (TC 2.A.49) family. ClC-2/CLCN2 subfamily. In terms of assembly, homodimer. Interacts with auxiliary subunit HEPACAM. In terms of processing, phosphorylated. Activated by dephosphorylation. As to expression, ubiquitously expressed. Expressed in neurons and glial cells (at protein level).

Its subcellular location is the cell membrane. It localises to the basolateral cell membrane. The protein resides in the cell projection. The protein localises to the dendritic spine membrane. It is found in the axon. It carries out the reaction chloride(in) = chloride(out). The enzyme catalyses thiocyanate(in) = thiocyanate(out). It catalyses the reaction bromide(in) = bromide(out). The catalysed reaction is nitrate(in) = nitrate(out). It carries out the reaction iodide(out) = iodide(in). With respect to regulation, common gate kinetics are down-regulated by intracellular ATP. Inhibited by AK-42, a derivative of meclofenamate. Inhibited by Cd(2+). Inhibited by Zn(2+) and PKC activation. Inhibited at acidic pH. CCLN2:HEPACAM channel conductance is up-regulated upon hypo-osmolarity. Voltage-gated and osmosensitive chloride channel. Forms a homodimeric channel where each subunit has its own ion conduction pathway. Conducts double-barreled currents controlled by two types of gates, two fast glutamate gates that control each subunit independently and a slow common gate that opens and shuts off both subunits simultaneously. Displays inward rectification currents activated upon membrane hyperpolarization and extracellular hypotonicity. Contributes to chloride conductance involved in neuron excitability. In hippocampal neurons, generates a significant part of resting membrane conductance and provides an additional chloride efflux pathway to prevent chloride accumulation in dendrites upon GABA receptor activation. In glia, associates with the auxiliary subunit HEPACAM/GlialCAM at astrocytic processes and myelinated fiber tracts where it may regulate transcellular chloride flux buffering extracellular chloride and potassium concentrations. Regulates aldosterone production in adrenal glands. The opening of CLCN2 channels at hyperpolarized membrane potentials in the glomerulosa causes cell membrane depolarization, activation of voltage-gated calcium channels and increased expression of aldosterone synthase, the rate-limiting enzyme for aldosterone biosynthesis. Contributes to chloride conductance in retinal pigment epithelium involved in phagocytosis of shed photoreceptor outer segments and photoreceptor renewal. Conducts chloride currents at the basolateral membrane of epithelial cells with a role in chloride reabsorption rather than secretion. Permeable to small monovalent anions with chloride &gt; thiocyanate &gt; bromide &gt; nitrate &gt; iodide ion selectivity. This chain is Chloride channel protein 2 (Clcn2), found in Rattus norvegicus (Rat).